The chain runs to 222 residues: Eukaryotic translation initiation factor 4E-2 (222 aa).

The segment covering 1–20 has biased composition (basic and acidic residues); the sequence is MVDEVEKPVSLEESKTNTRE. The segment at 1–35 is disordered; it reads MVDEVEKPVSLEESKTNTREVEEEGEIVGESDDTM. A compositionally biased stretch (acidic residues) spans 21–33; sequence VEEEGEIVGESDD. EIF4G-binding regions lie at residues 47–50 and 57–93; these read HALE and FDNPSGKSKQAAWGSSIRPIYTFSTVEDFWSVYNNIH. MRNA is bound by residues 65-70, Lys97, and 115-116; these read KQAAWG and WE. An intrachain disulfide couples Cys120 to Cys158. An EIF4G-binding region spans residues 141 to 150; the sequence is YTLLAMIGEQ. Residues 165 to 170 and 210 to 214 each bind mRNA; these read RVRQEK and KKLDR.

Belongs to the eukaryotic initiation factor 4E family. As to quaternary structure, EIF4F is a multi-subunit complex, the composition of which varies with external and internal environmental conditions. It is composed of at least EIF4A, EIF4E and EIF4G. EIF4E is also known to interact with other partners. In higher plants two isoforms of EIF4F have been identified, named isoform EIF4F and isoform EIF(iso)4F. Isoform EIF4F has subunits p220 and p26, whereas isoform EIF(iso)4F has subunits p82 and p28. (Microbial infection) Interacts with potyvirus viral genome-linked protein (VPg); this interaction is possible in susceptible hosts but impaired in resistant plants. According to the redox status, the Cys-120-Cys-158 disulfide bridge may have a role in regulating protein function by affecting its ability to bind capped mRNA. In terms of tissue distribution, strongly expressed in susceptible plants but not in resistant ones.

The protein resides in the nucleus. Its subcellular location is the cytoplasm. Component of the protein complex eIF4F, which is involved in the recognition of the mRNA cap, ATP-dependent unwinding of 5'-terminal secondary structure and recruitment of mRNA to the ribosome. Recognizes and binds the 7-methylguanosine-containing mRNA cap during an early step in the initiation of protein synthesis and facilitates ribosome binding by inducing the unwinding of the mRNAs secondary structures. Key component of recessive resistance to potyviruses. Its function is as follows. (Microbial infection) Susceptibility host factor required for viral infection (e.g. potato virus Y (PVY) and pepper mottle virus (PepMoV)) by recruiting viral RNAs to the host ribosomal complex via an interaction with viral genome-linked protein (VPg). This is Eukaryotic translation initiation factor 4E-2 from Nicotiana tabacum (Common tobacco).